Consider the following 144-residue polypeptide: 3-dehydroquinate dehydratase (144 aa).

Catalysis depends on Tyr-24, which acts as the Proton acceptor. Asn-76, His-82, and Asp-89 together coordinate substrate. The Proton donor role is filled by His-102. Substrate is bound by residues 103-104 (LS) and Arg-113.

Belongs to the type-II 3-dehydroquinase family. As to quaternary structure, homododecamer.

The catalysed reaction is 3-dehydroquinate = 3-dehydroshikimate + H2O. It functions in the pathway metabolic intermediate biosynthesis; chorismate biosynthesis; chorismate from D-erythrose 4-phosphate and phosphoenolpyruvate: step 3/7. Catalyzes a trans-dehydration via an enolate intermediate. The protein is 3-dehydroquinate dehydratase of Nitrosomonas europaea (strain ATCC 19718 / CIP 103999 / KCTC 2705 / NBRC 14298).